We begin with the raw amino-acid sequence, 116 residues long: Large ribosomal subunit protein uL24c (116 aa).

It belongs to the universal ribosomal protein uL24 family. Part of the 50S ribosomal subunit.

Its subcellular location is the plastid. The protein resides in the chloroplast. One of two assembly initiator proteins, it binds directly to the 5'-end of the 23S rRNA, where it nucleates assembly of the 50S subunit. The protein is Large ribosomal subunit protein uL24c (rpl24) of Pyropia yezoensis (Susabi-nori).